The primary structure comprises 98 residues: VIGGAECNINEHRSLVLLYYSSRLFGGGTLINKEWVLSAAHCDGENMKIIYXXXXXXXXXXKDRQIRVAKKYFCRDRKKSVIDKDIMLIKKPVNGSTH.

Positions 1–98 (VIGGAECNIN…IKKPVNGSTH (98 aa)) constitute a Peptidase S1 domain. Catalysis depends on charge relay system residues His-41 and Asp-85. N-linked (GlcNAc...) asparagine glycosylation occurs at Asn-94.

It belongs to the peptidase S1 family. Snake venom subfamily. As to quaternary structure, monomer. In terms of tissue distribution, expressed by the venom gland.

It is found in the secreted. With respect to regulation, inhibited by PMSF. Its function is as follows. Thrombin-like snake venom serine protease that preferentially cleaves the alpha-chain of fibrinogen (FGA). Induce platelet aggregation in the presence of exogenous fibrinogen. Possesses esterase and amidolytic activities. The protein is Thrombin-like enzyme cerastotin of Cerastes cerastes (Horned desert viper).